The following is a 346-amino-acid chain: tRNA N6-adenosine threonylcarbamoyltransferase (346 aa).

Positions 111 and 115 each coordinate Fe cation. Substrate is bound by residues 134–138 (LVSGG), D167, G180, and N279. A Fe cation-binding site is contributed by D307.

Belongs to the KAE1 / TsaD family. Requires Fe(2+) as cofactor.

The protein localises to the cytoplasm. It carries out the reaction L-threonylcarbamoyladenylate + adenosine(37) in tRNA = N(6)-L-threonylcarbamoyladenosine(37) in tRNA + AMP + H(+). Its function is as follows. Required for the formation of a threonylcarbamoyl group on adenosine at position 37 (t(6)A37) in tRNAs that read codons beginning with adenine. Is involved in the transfer of the threonylcarbamoyl moiety of threonylcarbamoyl-AMP (TC-AMP) to the N6 group of A37, together with TsaE and TsaB. TsaD likely plays a direct catalytic role in this reaction. The polypeptide is tRNA N6-adenosine threonylcarbamoyltransferase (Burkholderia vietnamiensis (strain G4 / LMG 22486) (Burkholderia cepacia (strain R1808))).